Reading from the N-terminus, the 664-residue chain is DNA ligase (664 aa).

NAD(+) contacts are provided by residues 32-36 and 80-81; these read DKDYD and SL. Lys122 functions as the N6-AMP-lysine intermediate in the catalytic mechanism. NAD(+) contacts are provided by Arg144, Glu178, and Lys314. Residues Cys407, Cys410, Cys423, and Cys429 each contribute to the Zn(2+) site. Residues 587-664 enclose the BRCT domain; it reads IKENIFNGKT…SEEDFKNMIG (78 aa).

The protein belongs to the NAD-dependent DNA ligase family. LigA subfamily. Mg(2+) is required as a cofactor. The cofactor is Mn(2+).

The catalysed reaction is NAD(+) + (deoxyribonucleotide)n-3'-hydroxyl + 5'-phospho-(deoxyribonucleotide)m = (deoxyribonucleotide)n+m + AMP + beta-nicotinamide D-nucleotide.. DNA ligase that catalyzes the formation of phosphodiester linkages between 5'-phosphoryl and 3'-hydroxyl groups in double-stranded DNA using NAD as a coenzyme and as the energy source for the reaction. It is essential for DNA replication and repair of damaged DNA. The sequence is that of DNA ligase from Clostridium novyi (strain NT).